A 374-amino-acid chain; its full sequence is Queuine tRNA-ribosyltransferase (374 aa).

Asp-89 functions as the Proton acceptor in the catalytic mechanism. Substrate is bound by residues 89-93, Asp-143, Gln-187, and Gly-214; that span reads DSGGF. The interval 245 to 251 is RNA binding; that stretch reads GVGKPED. Asp-264 acts as the Nucleophile in catalysis. The tract at residues 269–273 is RNA binding; important for wobble base 34 recognition; it reads TRNAR. 4 residues coordinate Zn(2+): Cys-302, Cys-304, Cys-307, and His-333.

It belongs to the queuine tRNA-ribosyltransferase family. Homodimer. Within each dimer, one monomer is responsible for RNA recognition and catalysis, while the other monomer binds to the replacement base PreQ1. The cofactor is Zn(2+).

It catalyses the reaction 7-aminomethyl-7-carbaguanine + guanosine(34) in tRNA = 7-aminomethyl-7-carbaguanosine(34) in tRNA + guanine. The protein operates within tRNA modification; tRNA-queuosine biosynthesis. Catalyzes the base-exchange of a guanine (G) residue with the queuine precursor 7-aminomethyl-7-deazaguanine (PreQ1) at position 34 (anticodon wobble position) in tRNAs with GU(N) anticodons (tRNA-Asp, -Asn, -His and -Tyr). Catalysis occurs through a double-displacement mechanism. The nucleophile active site attacks the C1' of nucleotide 34 to detach the guanine base from the RNA, forming a covalent enzyme-RNA intermediate. The proton acceptor active site deprotonates the incoming PreQ1, allowing a nucleophilic attack on the C1' of the ribose to form the product. After dissociation, two additional enzymatic reactions on the tRNA convert PreQ1 to queuine (Q), resulting in the hypermodified nucleoside queuosine (7-(((4,5-cis-dihydroxy-2-cyclopenten-1-yl)amino)methyl)-7-deazaguanosine). The chain is Queuine tRNA-ribosyltransferase from Yersinia pseudotuberculosis serotype O:1b (strain IP 31758).